Here is a 466-residue protein sequence, read N- to C-terminus: MSLSSRATLVVLCCLFMLIPSFTTAATEQGLHARSRCESYSFNNGKSFRSCTDLLVLNSYLHFNYAQETGVLEIAYHHSNLESSSWISWAINPTSKGMVGAQALVAYRNSTSGVMRAYTSSINSYSPMLQESPLSLRVTQVSAEYSNGEMMIFATLVLPPNTTVVNHLWQDGPLKEGDRLGMHAMSGDNLKSMASLDLLSGQVTTTKSVNRNMLLVKQIHAIVNALSWGILMPIGVMAARYMKNYEVLDPTWFYIHVVCQTTGYFSGLIGGLGTAIYMARHTGMRTTLHTVIGLLLFALGFLQILSLKARPNKDHKYRKYWNWYHHTMGYIVIVLSIYNIYKGLSILQPGSIWKIAYTTIICCIAAFAVVMEILQFKKRWARLFFKKSKDVEADQPTVSVDVIGETEKAERKKASGGIEIQIENYNITKNFMIPSVFVISYPHTSPPLLAFHSYHHPSTSIAATAA.

An N-terminal signal peptide occupies residues 1–25 (MSLSSRATLVVLCCLFMLIPSFTTA). Positions 57-172 (LNSYLHFNYA…TVVNHLWQDG (116 aa)) constitute a DOMON domain. Positions 179 to 380 (RLGMHAMSGD…MEILQFKKRW (202 aa)) constitute a Cytochrome b561 domain. The next 3 membrane-spanning stretches (helical) occupy residues 219–239 (IHAI…VMAA), 252–272 (WFYI…IGGL), and 287–307 (TLHT…ILSL). Heme b is bound by residues His220, His256, His289, and His325. A run of 2 helical transmembrane segments spans residues 327–347 (TMGY…LSIL) and 355–375 (IAYT…EILQ).

Heme b serves as cofactor.

It is found in the membrane. In terms of biological role, may act as a catecholamine-responsive trans-membrane electron transporter. The polypeptide is Cytochrome b561 and DOMON domain-containing protein At3g59070 (Arabidopsis thaliana (Mouse-ear cress)).